Consider the following 378-residue polypeptide: Small RNA 2'-O-methyltransferase (378 aa).

Aspartate 61 serves as a coordination point for S-adenosyl-L-methionine. The Mg(2+) site is built by glutamate 114, glutamate 117, histidine 118, and histidine 176.

It belongs to the methyltransferase superfamily. HEN1 family. Requires Mg(2+) as cofactor.

Its subcellular location is the cytoplasm. It carries out the reaction small RNA 3'-end nucleotide + S-adenosyl-L-methionine = small RNA 3'-end 2'-O-methylnucleotide + S-adenosyl-L-homocysteine + H(+). Methyltransferase that adds a 2'-O-methyl group at the 3'-end of small RNAs. This is Small RNA 2'-O-methyltransferase from Schizosaccharomyces pombe (strain 972 / ATCC 24843) (Fission yeast).